The sequence spans 440 residues: Xylose isomerase (440 aa).

Catalysis depends on residues His101 and Asp104. 7 residues coordinate Mg(2+): Glu232, Glu268, His271, Asp296, Asp307, Asp309, and Asp339.

Belongs to the xylose isomerase family. As to quaternary structure, homotetramer. It depends on Mg(2+) as a cofactor.

It localises to the cytoplasm. It carries out the reaction alpha-D-xylose = alpha-D-xylulofuranose. The protein is Xylose isomerase of Escherichia coli (strain SE11).